The sequence spans 237 residues: Class B acid phosphatase (237 aa).

An N-terminal signal peptide occupies residues 1 to 23; sequence MRKTPLALSAVFLLLSLNQSAFA. The active-site Nucleophile is the D69. Residues D69 and D71 each coordinate Mg(2+). The active-site Proton donor is the D71. Substrate-binding positions include 137–138 and K177; that span reads TG. Residue D192 coordinates Mg(2+).

This sequence belongs to the class B bacterial acid phosphatase family. In terms of assembly, homotetramer. Mg(2+) is required as a cofactor.

The protein resides in the periplasm. The enzyme catalyses a phosphate monoester + H2O = an alcohol + phosphate. Dephosphorylates several organic phosphate monoesters. Also has a phosphotransferase activity catalyzing the transfer of low-energy phosphate groups from organic phosphate monoesters to free hydroxyl groups of various organic compounds. The protein is Class B acid phosphatase of Rahnella sp. (strain Y9602).